The following is a 652-amino-acid chain: Small ribosomal subunit protein mS39 (652 aa).

A mitochondrion-targeting transit peptide spans 1-37 (MYLSRQLRLLPRANIACSLSSSGAHYTTAAPAEDAPI). PPR repeat units follow at residues 129 to 163 (DSVVDETSLAQLISQGELKDAVLVYNLLEQKGNPI), 225 to 259 (TPQSYASLIRGMAKYLQCERAYALLQEAGEKQVQL), 260 to 299 (DTNTFNSVIEIVSFLKDTAEQRWQLCKDLLNEMSQQKLRP), 300 to 338 (NLGTLNAVLQCISTFGNFKVARAAALQALPEFKQLGVNP), and 547 to 581 (TGQMLGDILTLLVRGGSYEKATEVFAHIDKNQHRI).

The protein belongs to the mitochondrion-specific ribosomal protein mS39 family.

The protein localises to the mitochondrion. Mitochondrial protein that may have a role in mitochondrial translation. Essential for larval development. The polypeptide is Small ribosomal subunit protein mS39 (Drosophila melanogaster (Fruit fly)).